The sequence spans 580 residues: Phosphatase and actin regulator 1 (580 aa).

2 positions are modified to phosphoserine: serine 67 and serine 78. Threonine 104 carries the post-translational modification Phosphothreonine. Residues 108-129 (RRRSKFANLGRIFKPWKWRKKK) carry the Nuclear localization signal motif. An RPEL 1 repeat occupies 138–163 (AALERKISMRQSREELIKRGVLKEIY). The segment at 331-351 (EQRVPCSTSYHSSGLHSSDGV) is disordered. Residues 337–348 (STSYHSSGLHSS) show a composition bias toward low complexity. RPEL repeat units lie at residues 422-447 (DSLAIKLSNRPSKRELEEKNILPRQT), 460-485 (TKLTRRLSQRPTAEELEQRNILKPRN), and 498-523 (RRLTRKLSQRPTVEELRERKILIRFS). The segment at 462–494 (LTRRLSQRPTAEELEQRNILKPRNEQEEQEEKR) is disordered. Serine 467 bears the Phosphoserine mark. Positions 471-494 (TAEELEQRNILKPRNEQEEQEEKR) are enriched in basic and acidic residues. The residue at position 505 (serine 505) is a Phosphoserine.

The protein belongs to the phosphatase and actin regulator family. In terms of assembly, interacts (via RPEL repeats) with ACTA1 and PPP1CA; ACTA1 and PPP1CA compete for the same binding site. Selectively expressed in brain. High levels are found in the olfactory tubercle, nucleus accumbens core and shell, caudate-putamen, cerebral cortex, hippocampus and piriform cortex. Moderate to high levels in the olfactory bulb, arcuate and ventromedial hypothalamus, subthalamic nucleus, amygdala, lateral septum, habenula and thalamus. Low expression, if any, in substantia nigra pars compacta/pars reticula and globus pallidus (at protein level).

It is found in the cytoplasm. Its subcellular location is the synapse. The protein resides in the nucleus. Binds actin monomers (G actin) and plays a role in multiple processes including the regulation of actin cytoskeleton dynamics, actin stress fibers formation, cell motility and survival, formation of tubules by endothelial cells, and regulation of PPP1CA activity. Involved in the regulation of cortical neuron migration and dendrite arborization. This Rattus norvegicus (Rat) protein is Phosphatase and actin regulator 1 (Phactr1).